The sequence spans 567 residues: Proline--tRNA ligase (567 aa).

It belongs to the class-II aminoacyl-tRNA synthetase family. ProS type 1 subfamily. In terms of assembly, homodimer.

Its subcellular location is the cytoplasm. The catalysed reaction is tRNA(Pro) + L-proline + ATP = L-prolyl-tRNA(Pro) + AMP + diphosphate. In terms of biological role, catalyzes the attachment of proline to tRNA(Pro) in a two-step reaction: proline is first activated by ATP to form Pro-AMP and then transferred to the acceptor end of tRNA(Pro). As ProRS can inadvertently accommodate and process non-cognate amino acids such as alanine and cysteine, to avoid such errors it has two additional distinct editing activities against alanine. One activity is designated as 'pretransfer' editing and involves the tRNA(Pro)-independent hydrolysis of activated Ala-AMP. The other activity is designated 'posttransfer' editing and involves deacylation of mischarged Ala-tRNA(Pro). The misacylated Cys-tRNA(Pro) is not edited by ProRS. This chain is Proline--tRNA ligase, found in Streptomyces coelicolor (strain ATCC BAA-471 / A3(2) / M145).